We begin with the raw amino-acid sequence, 603 residues long: MKYDKKYVRNFSIIAHIDHGKSTLADRLIEETGMLTHREMSEQVLDSMDLERERGITIKLKAIKLFYKAKDNNVYILNLIDTPGHVDFTYEVSRSLKACEGAVLIVDATQGVEAQTLGNVYLAIDQDLEILPVINKIDLPSADINFAKKEIEDIIGLDAENVPAVSAKEGINIVDVLEDIVKNVPAPIGDENKPLKALIFDSYYDFYKGVVVYVRVFDGCIKPGSEILMMSTNKTFEVTECGYTSSGMISTDEISAGDVGYVVCSIKNVKDARVGDTITDKNNPVDKPLEGYKQVTPMVYCGIYPAEGEDFNSVRDALEKLQVNDAALTFENETSIALGFGLRCGFLGLLHMEIIQERLDREFDLDIIATAPSVIYKVHKKDGTEIEIQNPTNFPKETEIDYVEEPVVHAEIMTPTDYVGVIMELCQGKRGTFIDMTYLDEKRVTIKYKLPLNEVIYDFYDALKSKTRGYASLDYELIGYEKSNLIKLEIMINSEKVDALTIIVHEDLAYERARKIVTKLKDEIPRHQFVIPVQAAIGNKIIARETIKAYRKDVLAKCYGGDITRKRKLLEKQKEGKKRMRSVGSVDVPQEAFLSVLKYDEVN.

The 183-residue stretch at 6-188 (KYVRNFSIIA…DIVKNVPAPI (183 aa)) folds into the tr-type G domain. Residues 18-23 (DHGKST) and 135-138 (NKID) contribute to the GTP site.

This sequence belongs to the TRAFAC class translation factor GTPase superfamily. Classic translation factor GTPase family. LepA subfamily.

The protein resides in the cell membrane. It carries out the reaction GTP + H2O = GDP + phosphate + H(+). Functionally, required for accurate and efficient protein synthesis under certain stress conditions. May act as a fidelity factor of the translation reaction, by catalyzing a one-codon backward translocation of tRNAs on improperly translocated ribosomes. Back-translocation proceeds from a post-translocation (POST) complex to a pre-translocation (PRE) complex, thus giving elongation factor G a second chance to translocate the tRNAs correctly. Binds to ribosomes in a GTP-dependent manner. This is Elongation factor 4 from Finegoldia magna (strain ATCC 29328 / DSM 20472 / WAL 2508) (Peptostreptococcus magnus).